The sequence spans 489 residues: Glucose-6-phosphate 1-dehydrogenase (489 aa).

Residues Gly-15–Lys-22, Arg-49, Asp-86–Val-87, and Lys-149 contribute to the NADP(+) site. Residues His-179, Lys-183, Glu-217, and Asp-236 each contribute to the substrate site. The active-site Proton acceptor is His-241. Substrate-binding residues include Lys-341 and Lys-346.

It belongs to the glucose-6-phosphate dehydrogenase family.

The enzyme catalyses D-glucose 6-phosphate + NADP(+) = 6-phospho-D-glucono-1,5-lactone + NADPH + H(+). It functions in the pathway carbohydrate degradation; pentose phosphate pathway; D-ribulose 5-phosphate from D-glucose 6-phosphate (oxidative stage): step 1/3. Its function is as follows. Catalyzes the oxidation of glucose 6-phosphate to 6-phosphogluconolactone. The sequence is that of Glucose-6-phosphate 1-dehydrogenase from Bacillus subtilis (strain 168).